We begin with the raw amino-acid sequence, 77 residues long: uncharacterized protein (77 aa).

Functionally, putative sugar-binding regulatory protein for the alpha-amylase gene. This is an uncharacterized protein from Streptomyces violaceus (Streptomyces venezuelae).